Consider the following 433-residue polypeptide: MNAKVEVGQPAANSFFAANLADADPEIAKAIELELGRQRHEIELIASENIVSKAVLEAQGSIMTNKYAEGYPGKRYYGGCQFVDIAENLAIERVRKLFDCQFANVQPNSGSQANQAVFLALLQPGDVFMGLDLAAGGHLTHGSPVNLSGKWFKAVSYGVRQSDHLIDMDAVEALAKEHKPKLIIAGGSAYPRHWDFARFRAIADSVGAYFFVDMAHFAGLVAGGAHPSPFPHAHVVTSTTHKTLRGPRGGLVLTNDADIAKKINSAVFPGLQGGPLMHVIAAKAVAFGEALRPDFRLYAQQVVVNAGTLASRLVEKGFAISSGGTDNHLMLVDLRPKQLTGKAAEAALGRASITCNKNGVPFDTASPFVTSGIRLGSPAATSRGFGTKEFQDVADLIAETLDGLAKNGEEGNAAVEASVKERAIALTQRFPIY.

(6S)-5,6,7,8-tetrahydrofolate contacts are provided by residues L133 and 137 to 139; that span reads GHL. An N6-(pyridoxal phosphate)lysine modification is found at K242. 366–368 lines the (6S)-5,6,7,8-tetrahydrofolate pocket; the sequence is SPF.

The protein belongs to the SHMT family. Homodimer. The cofactor is pyridoxal 5'-phosphate.

The protein localises to the cytoplasm. The enzyme catalyses (6R)-5,10-methylene-5,6,7,8-tetrahydrofolate + glycine + H2O = (6S)-5,6,7,8-tetrahydrofolate + L-serine. The protein operates within one-carbon metabolism; tetrahydrofolate interconversion. It functions in the pathway amino-acid biosynthesis; glycine biosynthesis; glycine from L-serine: step 1/1. Its function is as follows. Catalyzes the reversible interconversion of serine and glycine with tetrahydrofolate (THF) serving as the one-carbon carrier. This reaction serves as the major source of one-carbon groups required for the biosynthesis of purines, thymidylate, methionine, and other important biomolecules. Also exhibits THF-independent aldolase activity toward beta-hydroxyamino acids, producing glycine and aldehydes, via a retro-aldol mechanism. The protein is Serine hydroxymethyltransferase of Beijerinckia indica subsp. indica (strain ATCC 9039 / DSM 1715 / NCIMB 8712).